The primary structure comprises 267 residues: GTP cyclohydrolase FolE2 2 (267 aa).

The protein belongs to the GTP cyclohydrolase IV family.

The enzyme catalyses GTP + H2O = 7,8-dihydroneopterin 3'-triphosphate + formate + H(+). The protein operates within cofactor biosynthesis; 7,8-dihydroneopterin triphosphate biosynthesis; 7,8-dihydroneopterin triphosphate from GTP: step 1/1. In terms of biological role, converts GTP to 7,8-dihydroneopterin triphosphate. The polypeptide is GTP cyclohydrolase FolE2 2 (Cupriavidus metallidurans (strain ATCC 43123 / DSM 2839 / NBRC 102507 / CH34) (Ralstonia metallidurans)).